The following is a 122-amino-acid chain: Large ribosomal subunit protein uL14 (122 aa).

The protein belongs to the universal ribosomal protein uL14 family. Part of the 50S ribosomal subunit. Forms a cluster with proteins L3 and L19. In the 70S ribosome, L14 and L19 interact and together make contacts with the 16S rRNA in bridges B5 and B8.

Functionally, binds to 23S rRNA. Forms part of two intersubunit bridges in the 70S ribosome. The protein is Large ribosomal subunit protein uL14 of Granulibacter bethesdensis (strain ATCC BAA-1260 / CGDNIH1).